Reading from the N-terminus, the 254-residue chain is Small ribosomal subunit protein uS2 (254 aa).

This sequence belongs to the universal ribosomal protein uS2 family.

The polypeptide is Small ribosomal subunit protein uS2 (Legionella pneumophila subsp. pneumophila (strain Philadelphia 1 / ATCC 33152 / DSM 7513)).